We begin with the raw amino-acid sequence, 957 residues long: Glycine dehydrogenase (decarboxylating) (957 aa).

The residue at position 708 (Lys708) is an N6-(pyridoxal phosphate)lysine.

It belongs to the GcvP family. As to quaternary structure, the glycine cleavage system is composed of four proteins: P, T, L and H. The cofactor is pyridoxal 5'-phosphate.

It carries out the reaction N(6)-[(R)-lipoyl]-L-lysyl-[glycine-cleavage complex H protein] + glycine + H(+) = N(6)-[(R)-S(8)-aminomethyldihydrolipoyl]-L-lysyl-[glycine-cleavage complex H protein] + CO2. The glycine cleavage system catalyzes the degradation of glycine. The P protein binds the alpha-amino group of glycine through its pyridoxal phosphate cofactor; CO(2) is released and the remaining methylamine moiety is then transferred to the lipoamide cofactor of the H protein. The sequence is that of Glycine dehydrogenase (decarboxylating) from Shigella flexneri.